The chain runs to 268 residues: ClpXP adapter protein SpxH (268 aa).

It belongs to the SpxH family. In terms of assembly, interacts with Spx.

The protein resides in the cytoplasm. Adapter protein required for efficient degradation of Spx by ClpXP under non-stress conditions. Interaction with Spx stabilizes Spx and exposes the C-terminus of Spx for recognition and proteolysis by ClpXP. This chain is ClpXP adapter protein SpxH, found in Staphylococcus aureus (strain MRSA252).